The chain runs to 453 residues: Ribosomal protein uS12 methylthiotransferase RimO (453 aa).

The MTTase N-terminal domain maps to 6–116 (PKVGFVSLGC…VMEAVHEALP (111 aa)). Positions 15, 51, 80, 147, 151, and 154 each coordinate [4Fe-4S] cluster. One can recognise a Radical SAM core domain in the interval 133–370 (LTPRHYAYLK…MEKQAQISAA (238 aa)). The TRAM domain maps to 373-441 (EAKIGTVQQC…DHDLYGDALP (69 aa)).

This sequence belongs to the methylthiotransferase family. RimO subfamily. It depends on [4Fe-4S] cluster as a cofactor.

Its subcellular location is the cytoplasm. It catalyses the reaction L-aspartate(89)-[ribosomal protein uS12]-hydrogen + (sulfur carrier)-SH + AH2 + 2 S-adenosyl-L-methionine = 3-methylsulfanyl-L-aspartate(89)-[ribosomal protein uS12]-hydrogen + (sulfur carrier)-H + 5'-deoxyadenosine + L-methionine + A + S-adenosyl-L-homocysteine + 2 H(+). In terms of biological role, catalyzes the methylthiolation of an aspartic acid residue of ribosomal protein uS12. The protein is Ribosomal protein uS12 methylthiotransferase RimO of Stenotrophomonas maltophilia (strain R551-3).